Here is a 336-residue protein sequence, read N- to C-terminus: Phosphonate dehydrogenase (336 aa).

Residues 155 to 156 (AI), glutamate 175, 235 to 237 (PCR), and aspartate 261 each bind NAD(+). Residue arginine 237 is part of the active site. Residue glutamate 266 is part of the active site. Histidine 292 functions as the Proton donor in the catalytic mechanism. 292–295 (HIGS) serves as a coordination point for NAD(+).

Homodimer.

The enzyme catalyses phosphonate + NAD(+) + H2O = phosphate + NADH + H(+). With respect to regulation, inhibited by NaCl, NADH and sulfite. In terms of biological role, catalyzes phosphite (phosphonate) oxidation. The polypeptide is Phosphonate dehydrogenase (ptxD) (Stutzerimonas stutzeri (Pseudomonas stutzeri)).